Here is a 325-residue protein sequence, read N- to C-terminus: Aquaporin-8 (325 aa).

Residues 1–10 (MALRSPARDY) lie on the Cytoplasmic side of the membrane. The chain crosses the membrane as a helical span at residues 11–31 (LVSMIGELVGTFLFLFFAFAA). The Extracellular segment spans residues 32–52 (AQTANQPNGTKPLTPNATDTS). 2 N-linked (GlcNAc...) asparagine glycosylation sites follow: N39 and N47. A helical membrane pass occupies residues 53–73 (KLLYIALAFGASLAANVWVFF). The Cytoplasmic segment spans residues 74-100 (RVSGGQFNPAVTLALVLIRAVSPTKAL). The short motif at 81–83 (NPA) is the NPA 1 element. Residues 101–121 (ILIPAQLVGGSLAAAAVKGII) traverse the membrane as a helical segment. Topologically, residues 122 to 140 (PGDDILFAVSLGPGVANVQ) are extracellular. A helical membrane pass occupies residues 141–161 (GLFIELLLTFMLVFTILMLVA). At 162-167 (EKTKST) the chain is on the cytoplasmic side. Residues 168–188 (FVAPIGIGFSLFIGHLVGIFW) traverse the membrane as a helical segment. Topologically, residues 189-212 (TGAGINPARAFSPALIQASFPSYH) are extracellular. The NPA 2 signature appears at 194-196 (NPA). The helical transmembrane segment at 213 to 233 (WIYWLGPALGSFLAAGLYLGL) threads the bilayer. The Cytoplasmic portion of the chain corresponds to 234-325 (KEMKYELVGG…GSPDSTDLPT (92 aa)). Disordered regions lie at residues 279–298 (LGQF…LERG) and 305–325 (EDDP…DLPT). Residues 286-298 (TEGHRSPVDLERG) are compositionally biased toward basic and acidic residues.

Belongs to the MIP/aquaporin (TC 1.A.8) family.

Its subcellular location is the cell membrane. It catalyses the reaction H2O2(out) = H2O2(in). The catalysed reaction is H2O(in) = H2O(out). Functionally, plasma membrane water channel that regulates the reactive oxygen species (ROS)-signaling pathway through its capacity to act as a membrane channel for hydrogen peroxide uptake. Required for the formation of infection structures and infection, especially on host leaves where it is essential for the penetration into the host. Regulates the expression of proteins related to redox-regulation and intracellular signal transduction and plays a role in the distribution of mitochondria in the hyphae. The chain is Aquaporin-8 from Botryotinia fuckeliana (strain B05.10) (Noble rot fungus).